We begin with the raw amino-acid sequence, 269 residues long: Major pollen allergen Pha a 1 (269 aa).

A signal peptide spans 1-29 (MMKMVCSSSSSSLLVVAALLAVFVGSAQG). N-linked (GlcNAc...) asparagine glycosylation is present at Asn-38. The region spanning 67–173 (GGACGYKDVD…RRVKCKYPDG (107 aa)) is the Expansin-like EG45 domain. The Expansin-like CBD domain maps to 187 to 268 (NYLALLVKYV…GWKADTHDAS (82 aa)).

The protein belongs to the expansin family. Expansin B subfamily.

It is found in the secreted. In Phalaris aquatica (Canary grass), this protein is Major pollen allergen Pha a 1.